Here is a 370-residue protein sequence, read N- to C-terminus: Probable aspartic-type endopeptidase ARB_04018 (370 aa).

A signal peptide spans 1-21; it reads MWHSPFSTAFTLFLGFFTLTL. 2 N-linked (GlcNAc...) asparagine glycosylation sites follow: asparagine 80 and asparagine 102. In terms of domain architecture, Peptidase A1 spans 94 to 367; sequence FVNEITIGND…DHDGPKMGFA (274 aa). Residue aspartate 110 is part of the active site. N-linked (GlcNAc...) asparagine glycosylation occurs at asparagine 251. The active site involves aspartate 261. N-linked (GlcNAc...) asparagine glycosylation occurs at asparagine 298.

This sequence belongs to the peptidase A1 family.

The protein localises to the secreted. Probable aspartic-type endopeptidase which contributes to virulence. The protein is Probable aspartic-type endopeptidase ARB_04018 of Arthroderma benhamiae (strain ATCC MYA-4681 / CBS 112371) (Trichophyton mentagrophytes).